A 245-amino-acid polypeptide reads, in one-letter code: Lactate utilization protein A 1 (245 aa).

The protein belongs to the LutA/YkgE family.

Its function is as follows. Is involved in L-lactate degradation and allows cells to grow with lactate as the sole carbon source. In Bacillus mycoides (strain KBAB4) (Bacillus weihenstephanensis), this protein is Lactate utilization protein A 1.